The following is a 158-amino-acid chain: Cysteine-rich venom protein VAR7 (158 aa).

Residues 1–22 (MILLKLYLTLAAILCQSRGTTS) form the signal peptide. Residues 41–158 (NKHNDLRRTV…MGCAINLCPN (118 aa)) enclose the SCP domain. Cysteine 77 and cysteine 156 are disulfide-bonded.

It belongs to the CRISP family. Contains 8 disulfide bonds. As to expression, expressed by the venom gland.

Its subcellular location is the secreted. Its function is as follows. Blocks ryanodine receptors, and potassium channels. This chain is Cysteine-rich venom protein VAR7, found in Varanus acanthurus (Ridge-tailed monitor).